The primary structure comprises 286 residues: Meteorin-like protein (286 aa).

Residues 1 to 21 form the signal peptide; it reads MLSPFLAYLLSVVLLCRIARS. Cystine bridges form between cysteine 28–cysteine 51, cysteine 84–cysteine 120, cysteine 165–cysteine 235, cysteine 168–cysteine 259, and cysteine 178–cysteine 281.

It belongs to the meteorin family.

The protein localises to the secreted. Functionally, hormone induced following exercise or cold exposure that promotes energy expenditure. Induced either in the skeletal muscle after exercise or in adipose tissue following cold exposure and is present in the circulation. Able to stimulate energy expenditure associated with the browning of the white fat depots and improves glucose tolerance. This Danio rerio (Zebrafish) protein is Meteorin-like protein (metrnl).